A 245-amino-acid polypeptide reads, in one-letter code: 1-(5-phosphoribosyl)-5-[(5-phosphoribosylamino)methylideneamino] imidazole-4-carboxamide isomerase (245 aa).

Aspartate 7 acts as the Proton acceptor in catalysis. Aspartate 129 serves as the catalytic Proton donor.

The protein belongs to the HisA/HisF family.

Its subcellular location is the cytoplasm. It catalyses the reaction 1-(5-phospho-beta-D-ribosyl)-5-[(5-phospho-beta-D-ribosylamino)methylideneamino]imidazole-4-carboxamide = 5-[(5-phospho-1-deoxy-D-ribulos-1-ylimino)methylamino]-1-(5-phospho-beta-D-ribosyl)imidazole-4-carboxamide. The protein operates within amino-acid biosynthesis; L-histidine biosynthesis; L-histidine from 5-phospho-alpha-D-ribose 1-diphosphate: step 4/9. The chain is 1-(5-phosphoribosyl)-5-[(5-phosphoribosylamino)methylideneamino] imidazole-4-carboxamide isomerase from Shewanella sp. (strain MR-7).